The chain runs to 346 residues: Cyclic GMP-AMP synthase-like protein (346 aa).

Residues Ser58 and 70-72 each bind ATP; that span reads EFD. Residues Glu70, Asp72, and Asp165 each contribute to the Mg(2+) site. GTP contacts are provided by residues Asp165 and 212–219; that span reads MVCAPHWE. ATP is bound by residues 216–219, Lys237, and 252–256; these read PHWE and SYMLK.

Belongs to the mab-21 family. Mg(2+) serves as cofactor. Mn(2+) is required as a cofactor.

With respect to regulation, activated in response of some unknown stimulus. Not activated in response to L-monocytogenes infection. Its function is as follows. Probable nucleotidyltransferase that catalyzes the formation of cyclic dinucleotide second messenger in response to some unknown stimulus. Does not catalyze the formation of cyclic GMP-AMP from ATP and GTP. In Drosophila melanogaster (Fruit fly), this protein is Cyclic GMP-AMP synthase-like protein.